Reading from the N-terminus, the 148-residue chain is Lysozyme C (148 aa).

The first 18 residues, 1-18, serve as a signal peptide directing secretion; the sequence is MKVLVILGLVLLSVMVQG. The C-type lysozyme domain occupies 19-148; that stretch reads KVFERCELAR…VSQYVQGCGV (130 aa). 4 cysteine pairs are disulfide-bonded: cysteine 24–cysteine 146, cysteine 48–cysteine 134, cysteine 83–cysteine 99, and cysteine 95–cysteine 113. Catalysis depends on residues glutamate 53 and aspartate 71.

Belongs to the glycosyl hydrolase 22 family. Monomer.

The protein localises to the secreted. It catalyses the reaction Hydrolysis of (1-&gt;4)-beta-linkages between N-acetylmuramic acid and N-acetyl-D-glucosamine residues in a peptidoglycan and between N-acetyl-D-glucosamine residues in chitodextrins.. Lysozymes have primarily a bacteriolytic function; those in tissues and body fluids are associated with the monocyte-macrophage system and enhance the activity of immunoagents. The chain is Lysozyme C (LYZ) from Saimiri sciureus (Common squirrel monkey).